The following is a 335-amino-acid chain: N-lysine methyltransferase KMT5A-A (335 aa).

Disordered stretches follow at residues 1 to 91 (MGRG…EVEK) and 133 to 183 (LPPE…EIES). Basic and acidic residues predominate over residues 67–91 (SVTHHESKCLGKPSTETRKKAEVEK). The span at 145 to 161 (VKNKPLRKKTQRQKSPN) shows a compositional bias: basic residues. The region spanning 199-320 (EGIKMHMITG…VGEELLYDYG (122 aa)) is the SET domain. Residues 209–211 (KGR), Tyr-254, and 281–282 (NH) contribute to the S-adenosyl-L-methionine site.

Belongs to the class V-like SAM-binding methyltransferase superfamily. Histone-lysine methyltransferase family. PR/SET subfamily.

The protein resides in the nucleus. The protein localises to the chromosome. It catalyses the reaction L-lysyl(20)-[histone H4] + S-adenosyl-L-methionine = N(6)-methyl-L-lysyl(20)-[histone H4] + S-adenosyl-L-homocysteine + H(+). The catalysed reaction is L-lysyl-[protein] + S-adenosyl-L-methionine = N(6)-methyl-L-lysyl-[protein] + S-adenosyl-L-homocysteine + H(+). Its function is as follows. Protein-lysine N-methyltransferase that monomethylates both histones and non-histone proteins. Specifically monomethylates 'Lys-20' of histone H4 (H4K20me1). H4K20me1 is enriched during mitosis and represents a specific tag for epigenetic transcriptional repression. Mainly functions in euchromatin regions, thereby playing a central role in the silencing of euchromatic genes. Required for cell proliferation, probably by contributing to the maintenance of proper higher-order structure of DNA during mitosis. Involved in chromosome condensation and proper cytokinesis. In Xenopus laevis (African clawed frog), this protein is N-lysine methyltransferase KMT5A-A.